The sequence spans 327 residues: MESSLAAIANSGPISIFSYCVSSILMTVTNKYVLSGFSFNMNFLLLAVQSIVCIVTIGSLKSFGVITYRQFNKEEARKWSPIAVLLVIMIYTSSKALQYLSIPVYTIFKNLTIILIAYGEVLWFGGKVTTMALSSFLLMVFSSVVAWYGDEAVSGSGNESFIALYLGYFWMATNCFASAAFVLIMRKRIKLTNFKDFDTMYYNNLLSIPILLASSIIFEDWSAENLAVNFPSDNRTATIAAMVLSGASSVGISYCSAWCVRVTSSTTYSMVGALNKLPIALSGLVFFPAAVNFWSVASIFVGFAAGLVYAVAKQRQQKENVSLPSSK.

At 1–4 (MESS) the chain is on the cytoplasmic side. A helical transmembrane segment spans residues 5-25 (LAAIANSGPISIFSYCVSSIL). Over 26 to 36 (MTVTNKYVLSG) the chain is Lumenal. Residues 37 to 57 (FSFNMNFLLLAVQSIVCIVTI) traverse the membrane as a helical segment. The Cytoplasmic segment spans residues 58–78 (GSLKSFGVITYRQFNKEEARK). The helical transmembrane segment at 79 to 93 (WSPIAVLLVIMIYTS) threads the bilayer. At 94–102 (SKALQYLSI) the chain is on the lumenal side. A helical transmembrane segment spans residues 103–125 (PVYTIFKNLTIILIAYGEVLWFG). Residues 126-131 (GKVTTM) lie on the Cytoplasmic side of the membrane. The helical transmembrane segment at 132–149 (ALSSFLLMVFSSVVAWYG) threads the bilayer. Residues 150-163 (DEAVSGSGNESFIA) are Lumenal-facing. N-linked (GlcNAc...) asparagine glycosylation occurs at asparagine 158. A helical transmembrane segment spans residues 164–184 (LYLGYFWMATNCFASAAFVLI). The Cytoplasmic portion of the chain corresponds to 185-207 (MRKRIKLTNFKDFDTMYYNNLLS). Residues 208-228 (IPILLASSIIFEDWSAENLAV) form a helical membrane-spanning segment. Over 229 to 238 (NFPSDNRTAT) the chain is Lumenal. Asparagine 234 carries an N-linked (GlcNAc...) asparagine glycan. The chain crosses the membrane as a helical span at residues 239 to 259 (IAAMVLSGASSVGISYCSAWC). Topologically, residues 260-266 (VRVTSST) are cytoplasmic. A helical membrane pass occupies residues 267-289 (TYSMVGALNKLPIALSGLVFFPA). Residues 290–292 (AVN) are Lumenal-facing. A helical membrane pass occupies residues 293–312 (FWSVASIFVGFAAGLVYAVA). At 313 to 327 (KQRQQKENVSLPSSK) the chain is on the cytoplasmic side.

The protein belongs to the TPT transporter family. SLC35D subfamily. Homooligomer.

It localises to the golgi apparatus membrane. The protein localises to the cytoplasmic vesicle membrane. The protein resides in the endoplasmic reticulum membrane. Functionally, involved in the import of GDP-mannose from the cytoplasm into the Golgi lumen. The polypeptide is GDP-mannose transporter (VRG4) (Scheffersomyces stipitis (strain ATCC 58785 / CBS 6054 / NBRC 10063 / NRRL Y-11545) (Yeast)).